The following is a 256-amino-acid chain: Indole-3-glycerol phosphate synthase (256 aa).

This sequence belongs to the TrpC family.

The catalysed reaction is 1-(2-carboxyphenylamino)-1-deoxy-D-ribulose 5-phosphate + H(+) = (1S,2R)-1-C-(indol-3-yl)glycerol 3-phosphate + CO2 + H2O. Its pathway is amino-acid biosynthesis; L-tryptophan biosynthesis; L-tryptophan from chorismate: step 4/5. This chain is Indole-3-glycerol phosphate synthase, found in Chlorobaculum tepidum (strain ATCC 49652 / DSM 12025 / NBRC 103806 / TLS) (Chlorobium tepidum).